The chain runs to 684 residues: Hydroxyproline O-galactosyltransferase GALT2 (684 aa).

Over 1-22 (MKRVKSESFRGVYSSRRFKLSH) the chain is Cytoplasmic. Residues 23 to 43 (FLLAIAGFYLVFLAFKFPHFI) form a helical; Signal-anchor for type II membrane protein membrane-spanning segment. Over 44 to 684 (EMVAMLSGDT…KGRPQCCNFR (641 aa)) the chain is Lumenal. The tract at residues 80–102 (KLEDEDHQSGPSTTQKVSPEEKI) is disordered. N-linked (GlcNAc...) asparagine glycosylation is found at Asn-103, Asn-127, and Asn-162. One can recognise a Galectin domain in the interval 191 to 405 (RIMLLPCGLA…DVDIHSIHAT (215 aa)). N-linked (GlcNAc...) asparagine glycosylation is found at Asn-524 and Asn-632.

The protein belongs to the glycosyltransferase 31 family. Mn(2+) is required as a cofactor. Expressed in stems and at lower levels in cauline leaves and siliques.

The protein resides in the golgi apparatus membrane. It functions in the pathway protein modification; protein glycosylation. In terms of biological role, possesses hydroxyproline O-galactosyltransferase activity. Transfers galactose from UDP-galactose to hydroxyproline residues in the arabinogalactan proteins (AGPs). Is specific for AGPs containing non-contiguous peptidyl hydroxyproline residues. Utilizes UDP-galactose solely as sugar donor. The addition of galactose onto the peptidyl hydroxyproline residues in AGP core proteins represents the first committed step in arabinogalactan polysaccharide addition. AGP glycans play essential roles in both vegetative and reproductive plant growth. The sequence is that of Hydroxyproline O-galactosyltransferase GALT2 from Arabidopsis thaliana (Mouse-ear cress).